Reading from the N-terminus, the 385-residue chain is UPF0744 protein YSD83 (385 aa).

This sequence belongs to the UPF0744 family.

This is UPF0744 protein YSD83 (YSD83) from Saccharomyces paradoxus (Yeast).